The sequence spans 62 residues: Photosystem II reaction center protein Z (62 aa).

Transmembrane regions (helical) follow at residues 8-28 (LVSI…VILV) and 41-61 (YASA…NSFV).

This sequence belongs to the PsbZ family. As to quaternary structure, PSII is composed of 1 copy each of membrane proteins PsbA, PsbB, PsbC, PsbD, PsbE, PsbF, PsbH, PsbI, PsbJ, PsbK, PsbL, PsbM, PsbT, PsbX, PsbY, PsbZ, Psb30/Ycf12, at least 3 peripheral proteins of the oxygen-evolving complex and a large number of cofactors. It forms dimeric complexes.

The protein resides in the plastid. It localises to the chloroplast thylakoid membrane. Its function is as follows. May control the interaction of photosystem II (PSII) cores with the light-harvesting antenna, regulates electron flow through the 2 photosystem reaction centers. PSII is a light-driven water plastoquinone oxidoreductase, using light energy to abstract electrons from H(2)O, generating a proton gradient subsequently used for ATP formation. This chain is Photosystem II reaction center protein Z, found in Guillardia theta (Cryptophyte).